The sequence spans 308 residues: Mannan endo-1,4-beta-mannosidase (308 aa).

Glu125 acts as the Proton donor in catalysis. The active-site Nucleophile is Glu220. The segment at 284 to 308 (DGLQETSKPSTVFTDDNGGHPEPPT) is disordered. Positions 287–297 (QETSKPSTVFT) are enriched in polar residues.

Belongs to the glycosyl hydrolase 5 (cellulase A) family.

It catalyses the reaction Random hydrolysis of (1-&gt;4)-beta-D-mannosidic linkages in mannans, galactomannans and glucomannans.. Its function is as follows. Catalyzes the endo hydrolysis of beta-1,4-linked mannan, galactomannan and glucomannan. It is able to hydrolyze mannosidic linkages that are flanked by mannose or glucose. The protein is Mannan endo-1,4-beta-mannosidase of Salipaludibacillus agaradhaerens (Bacillus agaradhaerens).